The sequence spans 533 residues: Spindle pole body protein CSA6 (533 aa).

Disordered regions lie at residues 1–32 (MEDSTEDIIKSFTLEQSPEIKPKPKSKTSDLT) and 53–130 (DKYD…QEDE). Composition is skewed to basic and acidic residues over residues 18–30 (PEIKPKPKSKTSD) and 53–68 (DKYDQNVSDSEHDLTP). Residues 83 to 94 (PSKFSSSIPQKP) show a composition bias toward low complexity. Over residues 103-121 (SSPTKNYTDHINQLRSGPN) the composition is skewed to polar residues. Positions 136–236 (KYEIKRLKQE…RSERDELVKD (101 aa)) form a coiled coil. Over residues 309–318 (EKDKPSEDKT) the composition is skewed to basic and acidic residues. 2 disordered regions span residues 309–329 (EKDKPSEDKTSSPNFDSSKDA) and 349–453 (SANS…QSTK). Polar residues-rich tracts occupy residues 349–392 (SANS…SNSQ) and 405–421 (IYSSSTPNTNGYNQSSH). Over residues 432–445 (PRVERDHWTDRPPS) the composition is skewed to basic and acidic residues.

The protein localises to the cytoplasm. It localises to the cytoskeleton. Its subcellular location is the microtubule organizing center. It is found in the spindle pole body. Plays a role in mitotic spindle pole body organization, possibly at the point of spindle pole body separation. Required for mitotic exit. In Candida dubliniensis (strain CD36 / ATCC MYA-646 / CBS 7987 / NCPF 3949 / NRRL Y-17841) (Yeast), this protein is Spindle pole body protein CSA6.